We begin with the raw amino-acid sequence, 251 residues long: Adenosylcobinamide-GDP ribazoletransferase (251 aa).

6 helical membrane passes run 36-56, 60-80, 110-130, 181-201, 202-222, and 231-251; these read LYPF…FVLS, VPIM…TGFL, VGAF…AGIF, EIIL…TLGI, NYLI…LKVK, and DVAG…LGII.

This sequence belongs to the CobS family. The cofactor is Mg(2+).

The protein localises to the cell membrane. It catalyses the reaction alpha-ribazole + adenosylcob(III)inamide-GDP = adenosylcob(III)alamin + GMP + H(+). The catalysed reaction is alpha-ribazole 5'-phosphate + adenosylcob(III)inamide-GDP = adenosylcob(III)alamin 5'-phosphate + GMP + H(+). It functions in the pathway cofactor biosynthesis; adenosylcobalamin biosynthesis; adenosylcobalamin from cob(II)yrinate a,c-diamide: step 7/7. In terms of biological role, joins adenosylcobinamide-GDP and alpha-ribazole to generate adenosylcobalamin (Ado-cobalamin). Also synthesizes adenosylcobalamin 5'-phosphate from adenosylcobinamide-GDP and alpha-ribazole 5'-phosphate. This is Adenosylcobinamide-GDP ribazoletransferase from Clostridium perfringens (strain SM101 / Type A).